The primary structure comprises 662 residues: Sodium/glucose cotransporter 1 (662 aa).

At 1–24 (MDSSTLSPLTTSTAAPLESYERIR) the chain is on the extracellular side. The helical transmembrane segment at 25 to 47 (NAADISVIVIYFLVVMAVGLWAM) threads the bilayer. Topologically, residues 48–66 (FSTNRGTVGGFFLAGRSMV) are cytoplasmic. The chain crosses the membrane as a helical span at residues 67–90 (WWPIGASLFASNIGSGHFVGLAGT). The Extracellular portion of the chain corresponds to 91 to 95 (GAASG). Residues 96 to 117 (IATGGFEWNALIMVVVLGWVFV) traverse the membrane as a helical segment. The Cytoplasmic segment spans residues 118–139 (PIYIRAGVVTMPEYLQKRFGGK). The chain crosses the membrane as a helical span at residues 140-169 (RIQIYLSILSLLLYIFTKISADIFSGAIFI). Residues 170–176 (QLTLGLD) lie on the Extracellular side of the membrane. Residues 177-193 (IYVAIIILLVITGLYTI) form a helical membrane-spanning segment. At 194–202 (TGGLAAVIY) the chain is on the cytoplasmic side. Residues 203–221 (TDTLQTAIMMVGSVILTGF) traverse the membrane as a helical segment. The Extracellular segment spans residues 222–275 (AFHEVGGYEAFTEKYMRAIPSQISYGNTSIPQKCYTPREDAFHIFRDAITGDIP). An N-linked (GlcNAc...) asparagine glycan is attached at Asn-248. 5 cysteine pairs are disulfide-bonded: Cys-255–Cys-511, Cys-255–Cys-608, Cys-345–Cys-351, Cys-355–Cys-361, and Cys-517–Cys-522. Residues 276–295 (WPGLVFGMSILTLWYWCTDQ) form a helical membrane-spanning segment. The Cytoplasmic portion of the chain corresponds to 296–309 (VIVQRCLSAKNLSH). The helical transmembrane segment at 310-331 (VKAGCILCGYLKVMPMFLIVMM) threads the bilayer. Residues 332–375 (GMVSRILYTDKVACVVPSECERYCGTRVGCTNIAFPTLVVELMP) are Extracellular-facing. The helical transmembrane segment at 376 to 406 (NGLRGLMLSVMMASLMSSLTSIFNSASTLFT) threads the bilayer. Over 407–422 (MDIYTKIRKKASEKEL) the chain is Cytoplasmic. The chain crosses the membrane as a helical span at residues 423–444 (MIAGRLFMLFLIGISIAWVPIV). Over 445-451 (QSAQSGQ) the chain is Extracellular. A helical transmembrane segment spans residues 452 to 477 (LFDYIQSITSYLGPPIAAVFLLAIFW). Gln-457 contributes to the D-glucose binding site. Over 478–481 (KRVN) the chain is Cytoplasmic. Residues 482 to 504 (EPGAFWGLVLGFLIGISRMITEF) traverse the membrane as a helical segment. Over 505-525 (AYGTGSCMEPSNCPTIICGVH) the chain is Extracellular. A helical transmembrane segment spans residues 526-547 (YLYFAIILFVISIITVVVVSLF). The Cytoplasmic segment spans residues 548–642 (TKPIPDVHLY…TSEHPLWRTV (95 aa)). Residues 643 to 660 (VNINGVILLAVAVFCYAY) form a helical membrane-spanning segment. The Extracellular portion of the chain corresponds to 661–662 (FA).

It belongs to the sodium:solute symporter (SSF) (TC 2.A.21) family. In terms of processing, N-glycosylation is not necessary for the cotransporter function. Found predominantly in intestine, renal cortex and in outer renal medulla.

The protein localises to the apical cell membrane. It catalyses the reaction D-glucose(out) + 2 Na(+)(out) = D-glucose(in) + 2 Na(+)(in). It carries out the reaction D-galactose(out) + 2 Na(+)(out) = D-galactose(in) + 2 Na(+)(in). Enhanced by the interaction with PDZK1IP1/MAP17; but unlike SLC5A2/SGLT2, PDZK1IP1 is not essential for SLC5A1 transporter activity. Possibly modulated by cholesterol binding. Functionally, electrogenic Na(+)-coupled sugar symporter that actively transports D-glucose or D-galactose at the plasma membrane, with a Na(+) to sugar coupling ratio of 2:1. Transporter activity is driven by a transmembrane Na(+) electrochemical gradient set by the Na(+)/K(+) pump. Has a primary role in the transport of dietary monosaccharides from enterocytes to blood. Responsible for the absorption of D-glucose or D-galactose across the apical brush-border membrane of enterocytes, whereas basolateral exit is provided by GLUT2. Additionally, functions as a D-glucose sensor in enteroendocrine cells, triggering the secretion of the incretins GCG and GIP that control food intake and energy homeostasis. Together with SGLT2, functions in reabsorption of D-glucose from glomerular filtrate, playing a nonredundant role in the S3 segment of the proximal tubules. Transports D-glucose into endometrial epithelial cells, controlling glycogen synthesis and nutritional support for the embryo as well as the decidual transformation of endometrium prior to conception. Acts as a water channel enabling passive water transport in response to the osmotic gradient created upon sugar and Na(+) uptake. Has high water conductivity comparable to aquaporins and therefore is expected to play an important role in transepithelial water permeability, especially in the small intestine. This Oryctolagus cuniculus (Rabbit) protein is Sodium/glucose cotransporter 1 (SLC5A1).